A 195-amino-acid polypeptide reads, in one-letter code: NADH-quinone oxidoreductase subunit B (195 aa).

[4Fe-4S] cluster contacts are provided by Cys74, Cys75, Cys139, and Cys169.

This sequence belongs to the complex I 20 kDa subunit family. NDH-1 is composed of 14 different subunits. Subunits NuoB, C, D, E, F, and G constitute the peripheral sector of the complex. Requires [4Fe-4S] cluster as cofactor.

It is found in the cell inner membrane. The catalysed reaction is a quinone + NADH + 5 H(+)(in) = a quinol + NAD(+) + 4 H(+)(out). In terms of biological role, NDH-1 shuttles electrons from NADH, via FMN and iron-sulfur (Fe-S) centers, to quinones in the respiratory chain. The immediate electron acceptor for the enzyme in this species is believed to be ubiquinone. Couples the redox reaction to proton translocation (for every two electrons transferred, four hydrogen ions are translocated across the cytoplasmic membrane), and thus conserves the redox energy in a proton gradient. This chain is NADH-quinone oxidoreductase subunit B, found in Methylorubrum extorquens (strain PA1) (Methylobacterium extorquens).